Reading from the N-terminus, the 87-residue chain is Small ribosomal subunit protein bS20 (87 aa).

Positions 1–22 (MANSAQARKRARQSLKARAHNA) are disordered. A compositionally biased stretch (basic residues) spans 7–19 (ARKRARQSLKARA).

Belongs to the bacterial ribosomal protein bS20 family.

Functionally, binds directly to 16S ribosomal RNA. In Laribacter hongkongensis (strain HLHK9), this protein is Small ribosomal subunit protein bS20.